Consider the following 139-residue polypeptide: MAFSPKRVKHRKVQRGRIKGEATRCNNIDFGDYALVSLEPFLLTNRQIEAARVALNRKIKRGGKLWIRVFPDKPYSKKPAEVRMGGGKGAPEYWVAVVKPGTIIFELAGVDKNLAEQAMTLAGSKLPFKTRFAEQIQAD.

This sequence belongs to the universal ribosomal protein uL16 family. Part of the 50S ribosomal subunit.

Its function is as follows. Binds 23S rRNA and is also seen to make contacts with the A and possibly P site tRNAs. This is Large ribosomal subunit protein uL16 from Treponema denticola (strain ATCC 35405 / DSM 14222 / CIP 103919 / JCM 8153 / KCTC 15104).